The sequence spans 302 residues: RNA polymerase sigma factor RpoH (302 aa).

The segment at 57 to 126 is sigma-70 factor domain-2; that stretch reads LVTSHLRLVA…IQEYILRSWS (70 aa). Residues 81–84 carry the Interaction with polymerase core subunit RpoC motif; that stretch reads ELIS. A sigma-70 factor domain-4 region spans residues 235-286; it reads AMDKLNDREKHILTERRLSDNPKTLEELSQVYGVSRERVRQIEVRAFDKLQK. The H-T-H motif DNA-binding region spans 259–278; sequence LEELSQVYGVSRERVRQIEV.

Belongs to the sigma-70 factor family. RpoH subfamily. In terms of assembly, interacts with the RNA polymerase core enzyme.

It is found in the cytoplasm. Sigma factors are initiation factors that promote the attachment of RNA polymerase to specific initiation sites and are then released. This sigma factor is involved in regulation of expression of heat shock genes. This chain is RNA polymerase sigma factor RpoH, found in Zymomonas mobilis subsp. mobilis (strain ATCC 31821 / ZM4 / CP4).